Here is a 72-residue protein sequence, read N- to C-terminus: DNA-directed RNA polymerase subunit omega (72 aa).

This sequence belongs to the RNA polymerase subunit omega family. The RNAP catalytic core consists of 2 alpha, 1 beta, 1 beta' and 1 omega subunit. When a sigma factor is associated with the core the holoenzyme is formed, which can initiate transcription.

It catalyses the reaction RNA(n) + a ribonucleoside 5'-triphosphate = RNA(n+1) + diphosphate. In terms of biological role, promotes RNA polymerase assembly. Latches the N- and C-terminal regions of the beta' subunit thereby facilitating its interaction with the beta and alpha subunits. The polypeptide is DNA-directed RNA polymerase subunit omega (Clostridium acetobutylicum (strain ATCC 824 / DSM 792 / JCM 1419 / IAM 19013 / LMG 5710 / NBRC 13948 / NRRL B-527 / VKM B-1787 / 2291 / W)).